We begin with the raw amino-acid sequence, 418 residues long: Serine hydroxymethyltransferase (418 aa).

Residues leucine 121 and 125 to 127 (GHL) each bind (6S)-5,6,7,8-tetrahydrofolate. The residue at position 230 (lysine 230) is an N6-(pyridoxal phosphate)lysine. 355–357 (SPF) is a binding site for (6S)-5,6,7,8-tetrahydrofolate.

This sequence belongs to the SHMT family. As to quaternary structure, homodimer. Pyridoxal 5'-phosphate serves as cofactor.

It localises to the cytoplasm. It catalyses the reaction (6R)-5,10-methylene-5,6,7,8-tetrahydrofolate + glycine + H2O = (6S)-5,6,7,8-tetrahydrofolate + L-serine. The protein operates within one-carbon metabolism; tetrahydrofolate interconversion. It participates in amino-acid biosynthesis; glycine biosynthesis; glycine from L-serine: step 1/1. Functionally, catalyzes the reversible interconversion of serine and glycine with tetrahydrofolate (THF) serving as the one-carbon carrier. This reaction serves as the major source of one-carbon groups required for the biosynthesis of purines, thymidylate, methionine, and other important biomolecules. Also exhibits THF-independent aldolase activity toward beta-hydroxyamino acids, producing glycine and aldehydes, via a retro-aldol mechanism. The chain is Serine hydroxymethyltransferase from Methylococcus capsulatus (strain ATCC 33009 / NCIMB 11132 / Bath).